The chain runs to 482 residues: Cobyric acid synthase (482 aa).

A GATase cobBQ-type domain is found at 249-436 (QCKIACLALS…LHGLFTSDDF (188 aa)). Residue Cys-331 is the Nucleophile of the active site. Residue His-428 is part of the active site.

The protein belongs to the CobB/CobQ family. CobQ subfamily.

It participates in cofactor biosynthesis; adenosylcobalamin biosynthesis. In terms of biological role, catalyzes amidations at positions B, D, E, and G on adenosylcobyrinic A,C-diamide. NH(2) groups are provided by glutamine, and one molecule of ATP is hydrogenolyzed for each amidation. The chain is Cobyric acid synthase from Bradyrhizobium diazoefficiens (strain JCM 10833 / BCRC 13528 / IAM 13628 / NBRC 14792 / USDA 110).